We begin with the raw amino-acid sequence, 192 residues long: Elongation factor P (192 aa).

The interval 133 to 157 is disordered; the sequence is EVTETTPGVKGDTAQGGDKPATLES.

This sequence belongs to the elongation factor P family.

The protein resides in the cytoplasm. Its pathway is protein biosynthesis; polypeptide chain elongation. Functionally, involved in peptide bond synthesis. Stimulates efficient translation and peptide-bond synthesis on native or reconstituted 70S ribosomes in vitro. Probably functions indirectly by altering the affinity of the ribosome for aminoacyl-tRNA, thus increasing their reactivity as acceptors for peptidyl transferase. In Salinibacter ruber (strain DSM 13855 / M31), this protein is Elongation factor P.